We begin with the raw amino-acid sequence, 301 residues long: MEKSIKIGFIGLGAMGKPMAINLLKEGVTVYAFDLMEANVAAVVAQGAQACENNQKVAAASDIIFTSLPNAGIVETVMNGPGGVLSACKAGTVIVDMSSVSPSSTLKMAKVAAEKGIDYVDAPVSGGTKGAEAGTLTIMVGASEAVFEKIQPVLSVIGKDIYHVGDTGAGDAVKIVNNLLLGCNMASLAEALVLGVKCGLKPETMQEIIGKSSGRSYAMEAKMEKFIMSGDFAGGFAMDLQHKDLGLALEAGKEGNVPLPMTAMATQIFEGGRAMGLGREDMSAVIKVWEQMTGVSVSGGQ.

NAD(+)-binding positions include 8 to 22 and Ser-99; that span reads GFIG…MAIN. Lys-174 is an active-site residue. Lys-243 provides a ligand contact to NAD(+).

It belongs to the HIBADH-related family. Homotetramer.

The enzyme catalyses (S)-2-hydroxymethylglutarate + NAD(+) = 2-formylglutarate + NADH + H(+). It functions in the pathway cofactor degradation; nicotinate degradation; propanoate and pyruvate from 6-hydroxynicotinate: step 3/8. Catalyzes the conversion of 2-formylglutarate to (S)-2-hydroxymethylglutarate. Has very low activity with (S)-3-hydroxyisobutyrate. This chain is 2-(hydroxymethyl)glutarate dehydrogenase, found in Eubacterium barkeri (Clostridium barkeri).